Here is a 131-residue protein sequence, read N- to C-terminus: Small ribosomal subunit protein bS18 (131 aa).

Residues 1–10 show a composition bias toward polar residues; the sequence is MSNGTDSKTA. The disordered stretch occupies residues 1-60; that stretch reads MSNGTDSKTASAPPARSGGGFGGGGSRGGDRGDRGDRGGDRGDRGGGLGGDDDKRGGGRG. A compositionally biased stretch (gly residues) spans 17 to 27; it reads SGGGFGGGGSR. The span at 28 to 44 shows a compositional bias: basic and acidic residues; it reads GGDRGDRGDRGGDRGDR.

Belongs to the bacterial ribosomal protein bS18 family. In terms of assembly, part of the 30S ribosomal subunit. Forms a tight heterodimer with protein bS6.

Binds as a heterodimer with protein bS6 to the central domain of the 16S rRNA, where it helps stabilize the platform of the 30S subunit. This is Small ribosomal subunit protein bS18 from Myxococcus xanthus (strain DK1622).